The chain runs to 335 residues: Methionine import ATP-binding protein MetN (335 aa).

The ABC transporter domain maps to 2–241; that stretch reads IEFQRLHKSY…PKHVTTRRFV (240 aa). 38–45 is a binding site for ATP; the sequence is GHSGAGKS.

Belongs to the ABC transporter superfamily. Methionine importer (TC 3.A.1.24) family. The complex is composed of two ATP-binding proteins (MetN), two transmembrane proteins (MetI) and a solute-binding protein (MetQ).

It is found in the cell inner membrane. The enzyme catalyses L-methionine(out) + ATP + H2O = L-methionine(in) + ADP + phosphate + H(+). The catalysed reaction is D-methionine(out) + ATP + H2O = D-methionine(in) + ADP + phosphate + H(+). Its function is as follows. Part of the ABC transporter complex MetNIQ involved in methionine import. Responsible for energy coupling to the transport system. This is Methionine import ATP-binding protein MetN from Xanthomonas oryzae pv. oryzae (strain MAFF 311018).